A 404-amino-acid chain; its full sequence is Probable tRNA sulfurtransferase (404 aa).

Positions 61–166 (QTLVTGLPKI…HDATYMMAQV (106 aa)) constitute a THUMP domain. ATP is bound by residues 184–185 (ML), 209–210 (HF), arginine 266, glycine 288, and glutamine 297.

Belongs to the ThiI family.

The protein localises to the cytoplasm. The catalysed reaction is [ThiI sulfur-carrier protein]-S-sulfanyl-L-cysteine + a uridine in tRNA + 2 reduced [2Fe-2S]-[ferredoxin] + ATP + H(+) = [ThiI sulfur-carrier protein]-L-cysteine + a 4-thiouridine in tRNA + 2 oxidized [2Fe-2S]-[ferredoxin] + AMP + diphosphate. It catalyses the reaction [ThiS sulfur-carrier protein]-C-terminal Gly-Gly-AMP + S-sulfanyl-L-cysteinyl-[cysteine desulfurase] + AH2 = [ThiS sulfur-carrier protein]-C-terminal-Gly-aminoethanethioate + L-cysteinyl-[cysteine desulfurase] + A + AMP + 2 H(+). It functions in the pathway cofactor biosynthesis; thiamine diphosphate biosynthesis. Catalyzes the ATP-dependent transfer of a sulfur to tRNA to produce 4-thiouridine in position 8 of tRNAs, which functions as a near-UV photosensor. Also catalyzes the transfer of sulfur to the sulfur carrier protein ThiS, forming ThiS-thiocarboxylate. This is a step in the synthesis of thiazole, in the thiamine biosynthesis pathway. The sulfur is donated as persulfide by IscS. The sequence is that of Probable tRNA sulfurtransferase from Lysinibacillus sphaericus (strain C3-41).